Reading from the N-terminus, the 184-residue chain is Holliday junction branch migration complex subunit RuvA (184 aa).

A domain I region spans residues 1–64; sequence MIVAVEGIIT…EDADLLYGFL (64 aa). The interval 65–145 is domain II; it reads DEKEKRMFEM…ANDGEQYKIE (81 aa). Glu-145 is a region of interest (flexible linker). The tract at residues 145-184 is domain III; it reads ETISALENLGFKRDKINKILLNCKSTNTADLIKEALKKLA.

This sequence belongs to the RuvA family. As to quaternary structure, homotetramer. Forms an RuvA(8)-RuvB(12)-Holliday junction (HJ) complex. HJ DNA is sandwiched between 2 RuvA tetramers; dsDNA enters through RuvA and exits via RuvB. An RuvB hexamer assembles on each DNA strand where it exits the tetramer. Each RuvB hexamer is contacted by two RuvA subunits (via domain III) on 2 adjacent RuvB subunits; this complex drives branch migration. In the full resolvosome a probable DNA-RuvA(4)-RuvB(12)-RuvC(2) complex forms which resolves the HJ.

Its subcellular location is the cytoplasm. Its function is as follows. The RuvA-RuvB-RuvC complex processes Holliday junction (HJ) DNA during genetic recombination and DNA repair, while the RuvA-RuvB complex plays an important role in the rescue of blocked DNA replication forks via replication fork reversal (RFR). RuvA specifically binds to HJ cruciform DNA, conferring on it an open structure. The RuvB hexamer acts as an ATP-dependent pump, pulling dsDNA into and through the RuvAB complex. HJ branch migration allows RuvC to scan DNA until it finds its consensus sequence, where it cleaves and resolves the cruciform DNA. The sequence is that of Holliday junction branch migration complex subunit RuvA from Campylobacter hominis (strain ATCC BAA-381 / DSM 21671 / CCUG 45161 / LMG 19568 / NCTC 13146 / CH001A).